Here is a 316-residue protein sequence, read N- to C-terminus: 2,3-dihydroxyphenylpropionate/2,3-dihydroxicinnamic acid 1,2-dioxygenase (316 aa).

His-115 (proton donor) is an active-site residue. His-180 acts as the Proton acceptor in catalysis.

It belongs to the LigB/MhpB extradiol dioxygenase family. As to quaternary structure, homotetramer. Requires Fe(2+) as cofactor.

It catalyses the reaction 3-(2,3-dihydroxyphenyl)propanoate + O2 = (2Z,4E)-2-hydroxy-6-oxonona-2,4-dienedioate + H(+). The enzyme catalyses (2E)-3-(2,3-dihydroxyphenyl)prop-2-enoate + O2 = (2Z,4E,7E)-2-hydroxy-6-oxonona-2,4,7-trienedioate + H(+). The protein operates within aromatic compound metabolism; 3-phenylpropanoate degradation. Functionally, catalyzes the non-heme iron(II)-dependent oxidative cleavage of 2,3-dihydroxyphenylpropionic acid and 2,3-dihydroxicinnamic acid into 2-hydroxy-6-ketononadienedioate and 2-hydroxy-6-ketononatrienedioate, respectively. This chain is 2,3-dihydroxyphenylpropionate/2,3-dihydroxicinnamic acid 1,2-dioxygenase, found in Rhodococcus rhodochrous.